An 85-amino-acid chain; its full sequence is Alpha-conotoxin Lt28.1 (85 aa).

The signal sequence occupies residues 1 to 21 (MPKLEMMLLVLLILPLCYIDA). Positions 22–40 (VGPPPPWNMEDEIIEHWQK) are excised as a propeptide. Intrachain disulfides connect Cys61-Cys74, Cys66-Cys84, Cys67-Cys79, and Cys72-Cys81.

The protein belongs to the conotoxin D superfamily. In terms of tissue distribution, expressed by the venom duct.

Its subcellular location is the secreted. In terms of biological role, alpha-conotoxins act on postsynaptic membranes, they bind to the nicotinic acetylcholine receptors (nAChR) and thus inhibit them. This toxin weakly inhibits alpha-9-alpha-10/CHRNA9-CHRNA10 nAChRs (IC(50)=3 uM). The chain is Alpha-conotoxin Lt28.1 from Conus litteratus (Lettered cone).